A 121-amino-acid chain; its full sequence is Peptidyl-tRNA hydrolase (121 aa).

It belongs to the PTH2 family.

Its subcellular location is the cytoplasm. It carries out the reaction an N-acyl-L-alpha-aminoacyl-tRNA + H2O = an N-acyl-L-amino acid + a tRNA + H(+). The natural substrate for this enzyme may be peptidyl-tRNAs which drop off the ribosome during protein synthesis. The protein is Peptidyl-tRNA hydrolase of Sulfurisphaera tokodaii (strain DSM 16993 / JCM 10545 / NBRC 100140 / 7) (Sulfolobus tokodaii).